We begin with the raw amino-acid sequence, 186 residues long: TATA-box-binding protein D (186 aa).

2 consecutive repeat copies span residues 10 to 86 (IENV…VEDL) and 101 to 179 (VQNI…HERL).

This sequence belongs to the TBP family.

General factor that plays a role in the activation of archaeal genes transcribed by RNA polymerase. Binds specifically to the TATA box promoter element which lies close to the position of transcription initiation. This chain is TATA-box-binding protein D (tbpD), found in Halobacterium salinarum (strain ATCC 700922 / JCM 11081 / NRC-1) (Halobacterium halobium).